Reading from the N-terminus, the 408-residue chain is tRNA(Ile)-lysidine synthase (408 aa).

27-32 (SGGGDS) lines the ATP pocket.

This sequence belongs to the tRNA(Ile)-lysidine synthase family.

It localises to the cytoplasm. The enzyme catalyses cytidine(34) in tRNA(Ile2) + L-lysine + ATP = lysidine(34) in tRNA(Ile2) + AMP + diphosphate + H(+). Its function is as follows. Ligates lysine onto the cytidine present at position 34 of the AUA codon-specific tRNA(Ile) that contains the anticodon CAU, in an ATP-dependent manner. Cytidine is converted to lysidine, thus changing the amino acid specificity of the tRNA from methionine to isoleucine. This is tRNA(Ile)-lysidine synthase from Caulobacter vibrioides (strain ATCC 19089 / CIP 103742 / CB 15) (Caulobacter crescentus).